A 183-amino-acid chain; its full sequence is Capsid protein (183 aa).

Residues Asn-136 to Cys-183 are disordered. Basic residues predominate over residues Val-149 to Ser-176. Residues Ser-155, Ser-162, and Ser-170 each carry the phosphoserine; by host modification. Residues Ser-155–Pro-161 form a 1; half-length repeat. The 3 X 8 AA repeats of S-P-R-R-R-[PR]-S-Q stretch occupies residues Ser-155–Gln-177. Positions Arg-158–Arg-175 match the Bipartite nuclear localization signal motif. 2 repeat units span residues Ser-162 to Gln-169 and Ser-170 to Gln-177. An RNA binding region spans residues Gln-177–Cys-183.

The protein belongs to the orthohepadnavirus core antigen family. In terms of assembly, homodimerizes, then multimerizes. Interacts with cytosol exposed regions of viral L glycoprotein present in the reticulum-to-Golgi compartment. Interacts with human FLNB. Phosphorylated form interacts with host importin alpha; this interaction depends on the exposure of the NLS, which itself depends upon genome maturation and/or phosphorylation of the capsid protein. Interacts with host NUP153. Post-translationally, phosphorylated by host SRPK1, SRPK2, and maybe protein kinase C or GAPDH. Phosphorylation is critical for pregenomic RNA packaging. Protein kinase C phosphorylation is stimulated by HBx protein and may play a role in transport of the viral genome to the nucleus at the late step during the viral replication cycle.

Its subcellular location is the virion. It is found in the host cytoplasm. Functionally, self assembles to form an icosahedral capsid. Most capsids appear to be large particles with an icosahedral symmetry of T=4 and consist of 240 copies of capsid protein, though a fraction forms smaller T=3 particles consisting of 180 capsid proteins. Entering capsids are transported along microtubules to the nucleus. Phosphorylation of the capsid is thought to induce exposure of nuclear localization signal in the C-terminal portion of the capsid protein that allows binding to the nuclear pore complex via the importin (karyopherin-) alpha and beta. Capsids are imported in intact form through the nuclear pore into the nuclear basket, where it probably binds NUP153. Only capsids that contain the mature viral genome can release the viral DNA and capsid protein into the nucleoplasm. Immature capsids get stuck in the basket. Capsids encapsulate the pre-genomic RNA and the P protein. Pre-genomic RNA is reverse-transcribed into DNA while the capsid is still in the cytoplasm. The capsid can then either be directed to the nucleus, providing more genomes for transcription, or bud through the endoplasmic reticulum to provide new virions. This Hepatitis B virus genotype D subtype ayw (isolate Italy/CI/1992) (HBV-D) protein is Capsid protein.